The following is a 419-amino-acid chain: MKNFNLLAVSSILLVDLFRTHWGHNVDFSKAINLNGVSFSNVDASSLGAAQVRQSASRGRGLGENPKEEDGADKKKKKDEKQVEPKKPRENKLKQPVENADGNAGGNAGGNAGGNAGGNAGGNADGNAGGNAGGNAGGNAGGNAGGNADGNAGGNADGNAGGNADGNAGGNAGGNAGGNADGNAGGNAGGNAGGNAGGNAGGNAGGNAGGNADGNAGGNAGGNAGGNADGNAGGNAGGNAGGNAGGNAGGTAGGNADGNAGGNAGGNAGGNAGGNAGGNAGGNAGGNAGGNAGGNAGGNAGGNAGGNAGANAGNKKAGDAGAGQGQNNEAANMPNVKLVKEYLDKIRSTISTEWSPCSVTCGKGVRMRKKVSAANKKPEELDVNDLETEVCTMDKCAGIFNVVSNSLRLVILLVLALFN.

The N-terminal stretch at 1–23 (MKNFNLLAVSSILLVDLFRTHWG) is a signal peptide. Residues 50–111 (AQVRQSASRG…GNAGGNAGGN (62 aa)) form a disordered region. Residues 65 to 95 (NPKEEDGADKKKKKDEKQVEPKKPRENKLKQ) show a composition bias toward basic and acidic residues. The required for the binding to heparan sulfate proteoglycans (HSPGs) on the surface of host hepatocytes stretch occupies residues 81-89 (KQVEPKKPR). The region I; contains the proteolytic cleavage site stretch occupies residues 92 to 96 (KLKQP). Repeat copies occupy residues 99–102 (NADG), 103–106 (NAGG), 107–110 (NAGG), 111–114 (NAGG), 115–118 (NAGG), 119–122 (NAGG), 123–126 (NADG), 127–130 (NAGG), 131–134 (NAGG), 135–138 (NAGG), 139–142 (NAGG), 143–146 (NAGG), 147–150 (NADG), 151–154 (NAGG), 155–158 (NADG), 159–162 (NAGG), 163–166 (NADG), 167–170 (NAGG), 171–174 (NAGG), 175–178 (NAGG), 179–182 (NADG), 183–186 (NAGG), 187–190 (NAGG), 191–194 (NAGG), 195–198 (NAGG), 199–202 (NAGG), 203–206 (NAGG), 207–210 (NAGG), 211–214 (NADG), 215–218 (NAGG), 219–222 (NAGG), 223–226 (NAGG), 227–230 (NADG), 231–234 (NAGG), 235–238 (NAGG), 239–242 (NAGG), 243–246 (NAGG), and 247–250 (NAGG). A 54 X 4 AA approximate tandem repeats of N-A-G-G region spans residues 99–314 (NADGNAGGNA…GGNAGANAGN (216 aa)). The interval 146 to 237 (GNADGNAGGN…ADGNAGGNAG (92 aa)) is disordered. The 39; approximate repeat unit spans residues 251-254 (TAGG). Repeat copies occupy residues 255–258 (NADG), 259–262 (NAGG), 263–266 (NAGG), 267–270 (NAGG), 271–274 (NAGG), 275–278 (NAGG), 279–282 (NAGG), 283–286 (NAGG), 287–290 (NAGG), 291–294 (NAGG), 295–298 (NAGG), 299–302 (NAGG), and 303–306 (NAGG). The 53; approximate repeat unit spans residues 307–310 (NAGA). A 54; approximate repeat occupies 311–314 (NAGN). The segment at 312 to 332 (AGNKKAGDAGAGQGQNNEAAN) is disordered. The TSP type-1 domain occupies 345-397 (KIRSTISTEWSPCSVTCGKGVRMRKKVSAANKKPEELDVNDLETEVCTMDKCA). Intrachain disulfides connect Cys357–Cys391 and Cys361–Cys396. Thr360 is a glycosylation site (O-linked (Fuc) threonine). Cys396 carries GPI-anchor amidated cysteine lipidation. Residues 397 to 419 (AGIFNVVSNSLRLVILLVLALFN) constitute a propeptide, removed in mature form.

It belongs to the plasmodium circumsporozoite protein family. During host cell invasion, proteolytically cleaved at the cell membrane in the region I by a papain-like cysteine protease of parasite origin. Cleavage is triggered by the sporozoite contact with highly sulfated heparan sulfate proteoglycans (HSPGs) present on the host hepatocyte cell surface. Cleavage exposes the TSP type-1 (TSR) domain and is required for productive invasion of host hepatocytes but not for adhesion to the host cell membrane. Cleavage is dispensable for sporozoite development in the oocyst, motility and for traversal of host and vector cells. Post-translationally, O-glycosylated; maybe by POFUT2.

The protein resides in the cell membrane. The protein localises to the cytoplasm. Functionally, essential sporozoite protein. In the mosquito vector, required for sporozoite development in the oocyst, migration through the vector hemolymph and entry into the vector salivary glands. In the vertebrate host, required for sporozoite migration through the host dermis and infection of host hepatocytes. Binds to highly sulfated heparan sulfate proteoglycans (HSPGs) on the surface of host hepatocytes. Its function is as follows. In the vertebrate host, binds to highly sulfated heparan sulfate proteoglycans (HSPGs) on the surface of host hepatocytes and is required for sporozoite invasion of the host hepatocytes. In Plasmodium cynomolgi (strain Mulligan/NIH), this protein is Circumsporozoite protein.